A 493-amino-acid polypeptide reads, in one-letter code: Cyclin-dependent kinase-like 2 (493 aa).

A Protein kinase domain is found at 4–287; sequence YENLGLVGEG…CAELLHHDFF (284 aa). ATP contacts are provided by residues 10 to 18 and Lys33; that span reads VGEGSYGMV. The [NKR]KIAxRE signature appears at 45-51; it reads KKIAMRE. Asp126 functions as the Proton acceptor in the catalytic mechanism. Disordered stretches follow at residues 311–338 and 363–384; these read VSLS…KTLV and GEKA…SRTS. Basic and acidic residues predominate over residues 320–336; it reads RKKEKEKDDSLGEERKT.

This sequence belongs to the protein kinase superfamily. CMGC Ser/Thr protein kinase family. CDC2/CDKX subfamily.

The protein localises to the cytoplasm. The protein resides in the nucleus. The enzyme catalyses L-seryl-[protein] + ATP = O-phospho-L-seryl-[protein] + ADP + H(+). The catalysed reaction is L-threonyl-[protein] + ATP = O-phospho-L-threonyl-[protein] + ADP + H(+). The sequence is that of Cyclin-dependent kinase-like 2 from Pongo abelii (Sumatran orangutan).